The chain runs to 377 residues: Chaperone protein DnaJ (377 aa).

A J domain is found at Glu-5–Gly-69. Residues Gly-133 to Thr-215 form a CR-type zinc finger. Positions 146, 149, 163, 166, 189, 192, 203, and 206 each coordinate Zn(2+). CXXCXGXG motif repeat units follow at residues Cys-146 to Gly-153, Cys-163 to Gly-170, Cys-189 to Gly-196, and Cys-203 to Gly-210.

This sequence belongs to the DnaJ family. Homodimer. The cofactor is Zn(2+).

Its subcellular location is the cytoplasm. Participates actively in the response to hyperosmotic and heat shock by preventing the aggregation of stress-denatured proteins and by disaggregating proteins, also in an autonomous, DnaK-independent fashion. Unfolded proteins bind initially to DnaJ; upon interaction with the DnaJ-bound protein, DnaK hydrolyzes its bound ATP, resulting in the formation of a stable complex. GrpE releases ADP from DnaK; ATP binding to DnaK triggers the release of the substrate protein, thus completing the reaction cycle. Several rounds of ATP-dependent interactions between DnaJ, DnaK and GrpE are required for fully efficient folding. Also involved, together with DnaK and GrpE, in the DNA replication of plasmids through activation of initiation proteins. This is Chaperone protein DnaJ from Streptococcus uberis (strain ATCC BAA-854 / 0140J).